Consider the following 145-residue polypeptide: uncharacterized protein (145 aa).

Positions 1–18 are enriched in basic and acidic residues; it reads MAEQQPSKEEKKEDKKDE. Residues 1 to 61 form a disordered region; the sequence is MAEQQPSKEE…CTEGEWDASD (61 aa).

This is an uncharacterized protein from Caenorhabditis elegans.